The primary structure comprises 28 residues: Trypsin inhibitor 2 (28 aa).

Intrachain disulfides connect Cys3-Cys20, Cys10-Cys22, and Cys16-Cys27.

This sequence belongs to the protease inhibitor I7 (squash-type serine protease inhibitor) family.

The protein localises to the secreted. In terms of biological role, inhibits trypsin. The sequence is that of Trypsin inhibitor 2 from Momordica charantia (Bitter gourd).